An 89-amino-acid polypeptide reads, in one-letter code: Small ribosomal subunit protein uS15c (89 aa).

The protein belongs to the universal ribosomal protein uS15 family. As to quaternary structure, part of the 30S ribosomal subunit.

The protein resides in the plastid. Its subcellular location is the organellar chromatophore. This Paulinella chromatophora protein is Small ribosomal subunit protein uS15c (rps15).